The following is an 82-amino-acid chain: Small ribosomal subunit protein bS16 (82 aa).

The protein belongs to the bacterial ribosomal protein bS16 family.

The sequence is that of Small ribosomal subunit protein bS16 from Rippkaea orientalis (strain PCC 8801 / RF-1) (Cyanothece sp. (strain PCC 8801)).